The primary structure comprises 135 residues: uncharacterized protein (135 aa).

2 helical membrane-spanning segments follow: residues I11–I31 and L57–I77.

The protein localises to the cell membrane. This is an uncharacterized protein from Methanocaldococcus jannaschii (strain ATCC 43067 / DSM 2661 / JAL-1 / JCM 10045 / NBRC 100440) (Methanococcus jannaschii).